A 122-amino-acid polypeptide reads, in one-letter code: Large ribosomal subunit protein uL14 (122 aa).

This sequence belongs to the universal ribosomal protein uL14 family. Part of the 50S ribosomal subunit. Forms a cluster with proteins L3 and L19. In the 70S ribosome, L14 and L19 interact and together make contacts with the 16S rRNA in bridges B5 and B8.

Functionally, binds to 23S rRNA. Forms part of two intersubunit bridges in the 70S ribosome. This Xanthomonas oryzae pv. oryzae (strain MAFF 311018) protein is Large ribosomal subunit protein uL14.